A 347-amino-acid chain; its full sequence is NHL repeat-containing protein 3 (347 aa).

An N-terminal signal peptide occupies residues Met-1–Cys-25. Asn-32 carries N-linked (GlcNAc...) asparagine glycosylation. The NHL 1 repeat unit spans residues Arg-47 to Asp-93. A glycan (N-linked (GlcNAc...) asparagine) is linked at Asn-101. NHL repeat units lie at residues Thr-150–Asp-196 and Leu-200–Asp-243. N-linked (GlcNAc...) asparagine glycosylation is found at Asn-206 and Asn-278. Residues Gly-294–Leu-338 form an NHL 4 repeat.

The protein localises to the secreted. In Homo sapiens (Human), this protein is NHL repeat-containing protein 3 (NHLRC3).